A 495-amino-acid polypeptide reads, in one-letter code: uncharacterized protein (495 aa).

Residues 389–457 (PLPNNGACEH…KDATCPHCGN (69 aa)) form a CHY-type zinc finger. Positions 396, 398, 410, 411, 417, 420, 421, 427, 437, 440, 452, and 455 each coordinate Zn(2+). Residues 473–483 (GMRDRVRMSRK) show a composition bias toward basic and acidic residues. The interval 473–495 (GMRDRVRMSRKDPRKYKRKHHGN) is disordered. Basic residues predominate over residues 484–495 (DPRKYKRKHHGN).

The protein resides in the cytoplasm. This is an uncharacterized protein from Schizosaccharomyces pombe (strain 972 / ATCC 24843) (Fission yeast).